Consider the following 255-residue polypeptide: Phosphate import ATP-binding protein PstB (255 aa).

The ABC transporter domain maps to 10-250; sequence INIKDLNLWY…PQMKSTEDYI (241 aa). 42-49 provides a ligand contact to ATP; sequence GPSGCGKS.

This sequence belongs to the ABC transporter superfamily. Phosphate importer (TC 3.A.1.7) family. The complex is composed of two ATP-binding proteins (PstB), two transmembrane proteins (PstC and PstA) and a solute-binding protein (PstS).

It localises to the cell membrane. It catalyses the reaction phosphate(out) + ATP + H2O = ADP + 2 phosphate(in) + H(+). Its function is as follows. Part of the ABC transporter complex PstSACB involved in phosphate import. Responsible for energy coupling to the transport system. In Methanococcoides burtonii (strain DSM 6242 / NBRC 107633 / OCM 468 / ACE-M), this protein is Phosphate import ATP-binding protein PstB.